The chain runs to 139 residues: Peptide methionine sulfoxide reductase MsrB (139 aa).

The MsrB domain maps to 9–131; sequence TPSDNTELTE…NSASLSFIDD (123 aa). Positions 48, 51, 97, and 100 each coordinate Zn(2+). C120 acts as the Nucleophile in catalysis.

The protein belongs to the MsrB Met sulfoxide reductase family. Requires Zn(2+) as cofactor.

It catalyses the reaction L-methionyl-[protein] + [thioredoxin]-disulfide + H2O = L-methionyl-(R)-S-oxide-[protein] + [thioredoxin]-dithiol. The polypeptide is Peptide methionine sulfoxide reductase MsrB (Pectobacterium carotovorum subsp. carotovorum (strain PC1)).